Consider the following 386-residue polypeptide: Rhomboid domain-containing protein 3 (386 aa).

The next 5 membrane-spanning stretches (helical) occupy residues 20 to 40, 58 to 78, 92 to 112, 141 to 161, and 163 to 183; these read VLML…LVLA, LGHT…TVGW, ASAL…GLGL, GALP…LLSS, and PPFL…AGAF. Positions 324–362 constitute a UBA domain; it reads VSSLRLQQLERMGFPTEQAVVALAATGRVEGAVSLLVGG.

The protein localises to the membrane. This is Rhomboid domain-containing protein 3 (RHBDD3) from Homo sapiens (Human).